The primary structure comprises 319 residues: Bidirectional sugar transporter SWEET15 (319 aa).

The Extracellular portion of the chain corresponds to 1–10 (MAFMSMERST). Residues 11 to 31 (WAFTFGILGNLISLMVFLSPL) traverse the membrane as a helical segment. One can recognise a MtN3/slv 1 domain in the interval 13–99 (FTFGILGNLI…AMYLAYAPKS (87 aa)). The Cytoplasmic portion of the chain corresponds to 32–50 (PTFYRVYRKKSTEGFQSTP). The chain crosses the membrane as a helical span at residues 51–71 (YVVTLFSCMLWMYYAFVKSGA). E72 is a topological domain (extracellular). Residues 73–93 (LLVTINGVGCVIETVYLAMYL) traverse the membrane as a helical segment. Residues 94-106 (AYAPKSARMLTAK) are Cytoplasmic-facing. A helical transmembrane segment spans residues 107–127 (MLLGLNIGLFGVIALVTLLLS). Residues 128–134 (RGELRVH) are Extracellular-facing. The chain crosses the membrane as a helical span at residues 135-155 (VLGWICVAVSLSVFAAPLSII). A MtN3/slv 2 domain is found at 135–219 (VLGWICVAVS…ALYMAYRSKK (85 aa)). The Cytoplasmic portion of the chain corresponds to 156 to 167 (RLVIRTKSVEFM). A helical membrane pass occupies residues 168–188 (PFSLSFFLVLSAVIWFLYGLL). Over 189–191 (KKD) the chain is Extracellular. The helical transmembrane segment at 192-212 (VFVALPNVLGFVFGVAQMALY) threads the bilayer. The Cytoplasmic segment spans residues 213–319 (MAYRSKKPLV…KPDMAIVVEV (107 aa)).

The protein belongs to the SWEET sugar transporter family. Forms homooligomers and/or heterooligomers.

It localises to the cell membrane. Its function is as follows. Mediates both low-affinity uptake and efflux of sugar across the plasma membrane. The protein is Bidirectional sugar transporter SWEET15 (SWEET15) of Oryza sativa subsp. indica (Rice).